A 607-amino-acid polypeptide reads, in one-letter code: Guanine nucleotide-binding protein-like 1 (607 aa).

The segment covering Met1–Lys14 has biased composition (basic residues). The tract at residues Met1 to Tyr81 is disordered. Residues Gln15–Leu26 show a composition bias toward basic and acidic residues. Phosphoserine occurs at positions 32, 33, and 34. A phosphothreonine mark is found at Thr48 and Thr50. A phosphoserine mark is found at Ser51 and Ser68. The CP-type G domain occupies Trp178–Pro418. Position 225–228 (Asn225–Asp228) interacts with GTP. Ser324 bears the Phosphoserine mark. GTP contacts are provided by residues Gly367 to Ser374 and Asp411 to Leu415. Positions Gly547 to Cys607 are disordered. The span at Gly550–Thr584 shows a compositional bias: acidic residues. 3 positions are modified to phosphoserine: Ser561, Ser562, and Ser563.

This sequence belongs to the TRAFAC class YlqF/YawG GTPase family.

Functionally, possible regulatory or functional link with the histocompatibility cluster. This chain is Guanine nucleotide-binding protein-like 1 (GNL1), found in Homo sapiens (Human).